Consider the following 51-residue polypeptide: Large ribosomal subunit protein bL33 (51 aa).

The protein belongs to the bacterial ribosomal protein bL33 family.

The polypeptide is Large ribosomal subunit protein bL33 (Nitrosospira multiformis (strain ATCC 25196 / NCIMB 11849 / C 71)).